The sequence spans 148 residues: Arginine repressor (148 aa).

Belongs to the ArgR family.

The protein localises to the cytoplasm. Its pathway is amino-acid biosynthesis; L-arginine biosynthesis [regulation]. Regulates arginine biosynthesis genes. This Streptococcus pneumoniae serotype 4 (strain ATCC BAA-334 / TIGR4) protein is Arginine repressor (argR).